Reading from the N-terminus, the 109-residue chain is Small ribosomal subunit protein uS10 (109 aa).

This sequence belongs to the universal ribosomal protein uS10 family. In terms of assembly, part of the 30S ribosomal subunit.

Its function is as follows. Involved in the binding of tRNA to the ribosomes. The polypeptide is Small ribosomal subunit protein uS10 (Nanoarchaeum equitans (strain Kin4-M)).